We begin with the raw amino-acid sequence, 291 residues long: ATP synthase gamma chain (291 aa).

Belongs to the ATPase gamma chain family. As to quaternary structure, F-type ATPases have 2 components, CF(1) - the catalytic core - and CF(0) - the membrane proton channel. CF(1) has five subunits: alpha(3), beta(3), gamma(1), delta(1), epsilon(1). CF(0) has three main subunits: a, b and c.

The protein localises to the cell inner membrane. Functionally, produces ATP from ADP in the presence of a proton gradient across the membrane. The gamma chain is believed to be important in regulating ATPase activity and the flow of protons through the CF(0) complex. This is ATP synthase gamma chain from Roseobacter denitrificans (strain ATCC 33942 / OCh 114) (Erythrobacter sp. (strain OCh 114)).